The following is a 66-amino-acid chain: Large ribosomal subunit protein bL33c (66 aa).

This sequence belongs to the bacterial ribosomal protein bL33 family.

The protein resides in the plastid. The protein localises to the chloroplast. This chain is Large ribosomal subunit protein bL33c, found in Aethionema grandiflorum (Persian stone-cress).